The primary structure comprises 1387 residues: Regulator of G-protein signaling 12 (1387 aa).

Residues 21–97 (SVEVARGRAG…GVLRMVISEG (77 aa)) form the PDZ domain. Phosphoserine occurs at positions 171 and 194. A Glycyl lysine isopeptide (Lys-Gly) (interchain with G-Cter in SUMO2) cross-link involves residue Lys195. Positions 227–339 (VAMVVGYLGS…GALRTSCHVF (113 aa)) constitute a PID domain. 2 disordered regions span residues 409-428 (ADAH…IGNF) and 442-488 (LGGG…PLET). Polar residues predominate over residues 412 to 428 (HQNNSTSSNSDSGIGNF). 2 positions are modified to omega-N-methylarginine: Arg524 and Arg633. A disordered region spans residues 620–650 (RKTKEDKKSSKLGRGVALAQTSQRTSARRSF). Ser661 and Ser671 each carry phosphoserine. In terms of domain architecture, RGS spans 715–832 (SFERLLQDPV…LKSQLYQECV (118 aa)). The tract at residues 842 to 934 (PDSQQVPSSP…ANGGLCRRES (93 aa)) is disordered. Residues 849 to 869 (SSPASKHSISSDHSNVSTPKK) are compositionally biased toward low complexity. Phosphoserine occurs at positions 850 and 879. The span at 914–923 (DHGDHAHDAL) shows a compositional bias: basic and acidic residues. Ser943 is subject to Phosphoserine. 2 consecutive RBD domains span residues 962–1032 (KHCC…LGKR) and 1034–1104 (LFRL…LEER). Residues 1103–1117 (ERDPSRGKVSTEKQK) show a composition bias toward basic and acidic residues. Positions 1103 to 1168 (ERDPSRGKVS…ARDPRLSKRE (66 aa)) are disordered. A compositionally biased stretch (polar residues) spans 1122-1133 (KQSSAVNSSPRN). A compositionally biased stretch (basic and acidic residues) spans 1151 to 1168 (IRGENGKSARDPRLSKRE). The region spanning 1187–1209 (AEEFFELISKAQSNRADDQRGLL) is the GoLoco domain. Disordered regions lie at residues 1224–1325 (PGSS…EGTT) and 1349–1387 (ADLT…TSRF). Residues 1261 to 1280 (SDSPATSPASAQSPCSAYSP) are compositionally biased toward low complexity. Positions 1315-1325 (SCISTVQEGTT) are enriched in polar residues. The segment covering 1367 to 1380 (LPPPPLPQDTPGPT) has biased composition (pro residues).

Interacts with GNAI1, GNAI2 and GNAI3; the interactions are GDP-dependent. As to expression, detected in brain cortex GABAergic neurons, in striatum and substantia nigra, and in the Purkinje cell layer in the cerebellum and hippocampus (at protein level). Expressed at high levels in brain and lung and lower levels in testis, heart, and spleen.

It localises to the nucleus. The protein localises to the cytoplasm. The protein resides in the cell projection. It is found in the dendrite. Its subcellular location is the synapse. Regulates G protein-coupled receptor signaling cascades. Inhibits signal transduction by increasing the GTPase activity of G protein alpha subunits, thereby driving them into their inactive GDP-bound form. The protein is Regulator of G-protein signaling 12 (Rgs12) of Rattus norvegicus (Rat).